The following is a 392-amino-acid chain: Imidazolonepropionase (392 aa).

The Fe(3+) site is built by histidine 69 and histidine 71. Zn(2+) is bound by residues histidine 69 and histidine 71. 4-imidazolone-5-propanoate is bound by residues arginine 78, tyrosine 136, and histidine 163. Tyrosine 136 lines the N-formimidoyl-L-glutamate pocket. Histidine 226 provides a ligand contact to Fe(3+). Histidine 226 is a binding site for Zn(2+). Glutamine 229 contacts 4-imidazolone-5-propanoate. Aspartate 302 is a binding site for Fe(3+). Aspartate 302 is a binding site for Zn(2+). The N-formimidoyl-L-glutamate site is built by asparagine 304 and glycine 306. Serine 307 provides a ligand contact to 4-imidazolone-5-propanoate.

The protein belongs to the metallo-dependent hydrolases superfamily. HutI family. The cofactor is Zn(2+). Requires Fe(3+) as cofactor.

It is found in the cytoplasm. The catalysed reaction is 4-imidazolone-5-propanoate + H2O = N-formimidoyl-L-glutamate. Its pathway is amino-acid degradation; L-histidine degradation into L-glutamate; N-formimidoyl-L-glutamate from L-histidine: step 3/3. In terms of biological role, catalyzes the hydrolytic cleavage of the carbon-nitrogen bond in imidazolone-5-propanoate to yield N-formimidoyl-L-glutamate. It is the third step in the universal histidine degradation pathway. This is Imidazolonepropionase from Salinispora tropica (strain ATCC BAA-916 / DSM 44818 / JCM 13857 / NBRC 105044 / CNB-440).